A 37-amino-acid chain; its full sequence is Large ribosomal subunit protein bL36c (37 aa).

It belongs to the bacterial ribosomal protein bL36 family.

It is found in the plastid. Its subcellular location is the chloroplast. This is Large ribosomal subunit protein bL36c from Staurastrum punctulatum (Green alga).